Consider the following 231-residue polypeptide: Ribonuclease 3 (231 aa).

The region spanning 5–134 is the RNase III domain; it reads QKGIKEDFGI…FIGALYKDQG (130 aa). Glu47 lines the Mg(2+) pocket. Asp51 is an active-site residue. Residues Asp120 and Glu123 each coordinate Mg(2+). Glu123 is a catalytic residue. Positions 160–230 constitute a DRBM domain; that stretch reads DYKSKLQELL…AKKAYQDVTP (71 aa).

Belongs to the ribonuclease III family. In terms of assembly, homodimer. Mg(2+) serves as cofactor.

Its subcellular location is the cytoplasm. The catalysed reaction is Endonucleolytic cleavage to 5'-phosphomonoester.. Its function is as follows. Digests double-stranded RNA. Involved in the processing of primary rRNA transcript to yield the immediate precursors to the large and small rRNAs (23S and 16S). Processes some mRNAs, and tRNAs when they are encoded in the rRNA operon. Processes pre-crRNA and tracrRNA of type II CRISPR loci if present in the organism. The chain is Ribonuclease 3 from Oenococcus oeni (strain ATCC BAA-331 / PSU-1).